The following is a 2419-amino-acid chain: Telomere-associated protein RIF1 (2419 aa).

Disordered stretches follow at residues 1 to 24 (MTAPGRSPLEPLLETWEDPSVPPG) and 373 to 408 (SIPSPQGNSSRGSASPGLSPLTPGHKGASPYGSPRG). The segment covering 373-385 (SIPSPQGNSSRGS) has biased composition (polar residues). A phosphoserine mark is found at S385, S391, S779, S976, and S1005. Residue T1044 is modified to Phosphothreonine. Residues 1184-1198 (SSSTETSVVSSSSVS) are compositionally biased toward low complexity. 2 disordered regions span residues 1184 to 1594 (SSST…QAVP) and 1613 to 1637 (RVILQDSAGPADSLQAPPKGEEKSK). Composition is skewed to polar residues over residues 1199 to 1217 (NATFSGTPPQPTSRRQTFI) and 1228 to 1255 (RPFSPSPLNNISSTVTVRNNQDNTTNTD). Position 1215 is a phosphothreonine (T1215). 2 positions are modified to phosphoserine: S1231 and S1233. The span at 1263–1272 (REVTNSKSDS) shows a compositional bias: basic and acidic residues. The span at 1289–1302 (AEQSVTKKSKPSLT) shows a compositional bias: polar residues. The segment covering 1323-1345 (HVSENDDHPSEATLEHKDGDPKP) has biased composition (basic and acidic residues). 4 positions are modified to phosphoserine: S1407, S1439, S1457, and S1498. Positions 1416-1455 (SQERESGQQKKERRKEEEKIISKSPLRIKDDKLPTQKLTD) are enriched in basic and acidic residues. The segment covering 1457–1467 (SPIQENLTEKG) has biased composition (polar residues). A Phosphothreonine modification is found at T1504. Basic and acidic residues predominate over residues 1507–1516 (NLDKSSEKPL). Residues 1525-1537 (RRASQGLISAVEN) are compositionally biased toward polar residues. 5 positions are modified to phosphoserine: S1528, S1538, S1540, S1542, and S1550. The segment covering 1551–1560 (RKKRSGKWKN) has biased composition (basic residues). Residues S1562 and S1565 each carry the phosphoserine modification. Basic and acidic residues predominate over residues 1572–1581 (EEKKAEEEVM). S1680 and S1683 each carry phosphoserine. Position 1780 is a phosphothreonine (T1780). The residue at position 1784 (S1784) is a Phosphoserine. Residues 1812-1836 (ASEAVSEIQGPCSENHSPAEDPGLS) are disordered. Position 1842 is a phosphoserine (S1842). Residues 1882-2419 (DAFVAADSEK…RWRSPAHENS (538 aa)) form an interaction with condensed chromosomes in telophase region. Disordered stretches follow at residues 1890–1914 (EKSTQMDVSVDVATEEDNKKDECEA) and 1929–1983 (FNSG…AQMS). Phosphoserine is present on residues S1931, S2094, S2109, S2121, S2125, S2144, S2153, S2208, S2287, S2341, S2413, and S2419. Positions 2119-2394 (VWSPLASPST…TGSQLFEMHE (276 aa)) are interaction with ERCC6. Residues 2182–2212 (SPIIKSVKTSPTSHSKHNTTSAKGFLSPGSQ) are disordered. Positions 2189–2212 (KTSPTSHSKHNTTSAKGFLSPGSQ) are enriched in polar residues.

Belongs to the RIF1 family. As to quaternary structure, interacts with TP53BP1 (when phosphorylated by ATM). May interact with TRF2. Interacts with SHLD2. Interacts with ERCC6 (via WHD region). Interacts with ASTE1. In terms of tissue distribution, expressed in Sertoli cells, prospermatagonia, early primary spermatocytes, and in oocytes at all stages of their growth. Expressed in embryonic stem (ES) and embryonic germ (EG) cells: expression is lost upon differentiation.

The protein resides in the nucleus. It localises to the chromosome. The protein localises to the telomere. Its subcellular location is the cytoplasm. It is found in the cytoskeleton. The protein resides in the spindle. Key regulator of TP53BP1 that plays a key role in the repair of double-strand DNA breaks (DSBs) in response to DNA damage: acts by promoting non-homologous end joining (NHEJ)-mediated repair of DSBs. In response to DNA damage, interacts with ATM-phosphorylated TP53BP1. Interaction with TP53BP1 leads to dissociate the interaction between NUDT16L1/TIRR and TP53BP1, thereby unmasking the tandem Tudor-like domain of TP53BP1 and allowing recruitment to DNA DSBs. Once recruited to DSBs, RIF1 and TP53BP1 act by promoting NHEJ-mediated repair of DSBs. In the same time, RIF1 and TP53BP1 specifically counteract the function of BRCA1 by blocking DSBs resection via homologous recombination (HR) during G1 phase. Also required for immunoglobulin class-switch recombination (CSR) during antibody genesis, a process that involves the generation of DNA DSBs. Promotes NHEJ of dysfunctional telomeres. In Mus musculus (Mouse), this protein is Telomere-associated protein RIF1.